The following is a 360-amino-acid chain: N6-Methyl-AMP deaminase (360 aa).

Residues His-23 and His-25 each contribute to the Zn(2+) site. N(6)-methyl-AMP is bound by residues His-25, Asn-27, His-73, 105–108, Asp-147, and Gly-180; that span reads STPR. Zn(2+) is bound at residue His-207. N(6)-methyl-AMP contacts are provided by Glu-210, Asp-292, and Asp-293. Glu-210 (proton donor) is an active-site residue. Asp-292 provides a ligand contact to Zn(2+).

It belongs to the metallo-dependent hydrolases superfamily. Adenosine and AMP deaminases family. Monomer. Zn(2+) is required as a cofactor.

The catalysed reaction is N(6)-methyl-AMP + H2O + H(+) = IMP + methylamine. In terms of biological role, catalyzes the hydrolysis of the free cytosolic methylated adenosine nucleotide N(6)-methyl-AMP (N6-mAMP) to produce inositol monophosphate (IMP) and methylamine. Is required for the catabolism of cytosolic N6-mAMP, which is derived from the degradation of mRNA containing N6-methylated adenine (m6A). The protein is N6-Methyl-AMP deaminase (Mapda) of Mus musculus (Mouse).